A 275-amino-acid polypeptide reads, in one-letter code: Putative carbamate hydrolase RutD (275 aa).

The AB hydrolase-1 domain occupies 15 to 116 (TVVLSSGLGG…SLVVINGWTV (102 aa)).

It belongs to the AB hydrolase superfamily. Hydrolase RutD family.

It catalyses the reaction carbamate + 2 H(+) = NH4(+) + CO2. Involved in pyrimidine catabolism. May facilitate the hydrolysis of carbamate, a reaction that can also occur spontaneously. This is Putative carbamate hydrolase RutD from Pantoea ananatis (strain LMG 20103).